A 184-amino-acid chain; its full sequence is Dual-action ribosomal maturation protein DarP (184 aa).

The interval 1-27 (MSIPDTEIPVDDDGYDENGYDRPSKSQ) is disordered. A compositionally biased stretch (acidic residues) spans 8–18 (IPVDDDGYDEN).

This sequence belongs to the DarP family.

Its subcellular location is the cytoplasm. Its function is as follows. Member of a network of 50S ribosomal subunit biogenesis factors which assembles along the 30S-50S interface, preventing incorrect 23S rRNA structures from forming. Promotes peptidyl transferase center (PTC) maturation. This is Dual-action ribosomal maturation protein DarP from Bordetella avium (strain 197N).